Reading from the N-terminus, the 363-residue chain is Somatostatin receptor type 5 (363 aa).

Topologically, residues 1–35 (MEPLSLASTPSWNASAASSGNHNWSLVGSASPMGA) are extracellular. 2 N-linked (GlcNAc...) asparagine glycosylation sites follow: N13 and N23. The helical transmembrane segment at 36-63 (RAVLVPVLYLLVCTVGLSGNTLVIYVVL) threads the bilayer. At 64 to 73 (RHAKMKTVTN) the chain is on the cytoplasmic side. A helical transmembrane segment spans residues 74-99 (VYILNLAVADVLFMLGLPFLATQNAV). The Extracellular segment spans residues 100–111 (VSYWPFGSFLCR). C110 and C185 are disulfide-bonded. A helical transmembrane segment spans residues 112 to 133 (LVMTLDGINQFTSIFCLMVMSV). Residues 134 to 155 (DRYLAVVHPLRSARWRRPRVAK) lie on the Cytoplasmic side of the membrane. Residues 156–176 (MASAAVWVFSLLMSLPLLVFA) traverse the membrane as a helical segment. Residues 177-196 (DVQEGWGTCNLSWPEPVGLW) are Extracellular-facing. N-linked (GlcNAc...) asparagine glycosylation occurs at N186. Residues 197–221 (GAAFITYTSVLGFFGPLLVICLCYL) form a helical membrane-spanning segment. Topologically, residues 222 to 247 (LIVVKVKAAGMRVGSSRRRRSEPKVT) are cytoplasmic. The chain crosses the membrane as a helical span at residues 248–273 (RMVVVVVLVFVGCWLPFFIVNIVNLA). Residues 274–283 (FTLPEEPTSA) are Extracellular-facing. Residues 284–308 (GLYFFVVVLSYANSCANPLLYGFLS) traverse the membrane as a helical segment. At 309–363 (DNFRQSFRKVLCLRRGYGMEDADAIEPRPDKSGRPQATLPTRSCEANGLMQTSRI) the chain is on the cytoplasmic side. The S-palmitoyl cysteine; by ZDHHC5 moiety is linked to residue C320. Positions 331–363 (DAIEPRPDKSGRPQATLPTRSCEANGLMQTSRI) are disordered.

The protein belongs to the G-protein coupled receptor 1 family. As to quaternary structure, heterodimer with SSTR2. Heterodimerization with SSTR2 increases cell growth inhibition activity of SSTR2. Post-translationally, palmitoylated at Cys-320 by ZDHHC5, but not ZDHHC8. Palmitoylation creates an additional intracellular loop which is thought to be important for efficient coupling to G-proteins and may target the protein to lipid rafts. In terms of tissue distribution, prominent in the pituitary and small intestine. Low levels in islets and spleen. Not detected in kidney, pancreas, cerebellum, or cortex.

The protein localises to the cell membrane. Functionally, receptor for somatostatin-28. The activity of this receptor is mediated by G proteins which inhibit adenylyl cyclase. Increases cell growth inhibition activity of SSTR2 following heterodimerization. In Rattus norvegicus (Rat), this protein is Somatostatin receptor type 5 (Sstr5).